The primary structure comprises 497 residues: Glycerol kinase (497 aa).

Thr11 lines the ADP pocket. Positions 11, 12, and 13 each coordinate ATP. Residue Thr11 coordinates sn-glycerol 3-phosphate. Arg15 lines the ADP pocket. Sn-glycerol 3-phosphate contacts are provided by Arg81, Glu82, Tyr133, and Asp242. Residues Arg81, Glu82, Tyr133, Asp242, and Gln243 each contribute to the glycerol site. Positions 264 and 307 each coordinate ADP. Positions 264, 307, 311, and 412 each coordinate ATP. ADP contacts are provided by Gly412 and Asn416.

The protein belongs to the FGGY kinase family.

It catalyses the reaction glycerol + ATP = sn-glycerol 3-phosphate + ADP + H(+). The protein operates within polyol metabolism; glycerol degradation via glycerol kinase pathway; sn-glycerol 3-phosphate from glycerol: step 1/1. With respect to regulation, inhibited by fructose 1,6-bisphosphate (FBP). Its function is as follows. Key enzyme in the regulation of glycerol uptake and metabolism. Catalyzes the phosphorylation of glycerol to yield sn-glycerol 3-phosphate. This Variovorax paradoxus (strain S110) protein is Glycerol kinase.